A 175-amino-acid chain; its full sequence is Adenine phosphoribosyltransferase (175 aa).

This sequence belongs to the purine/pyrimidine phosphoribosyltransferase family. As to quaternary structure, homodimer.

It is found in the cytoplasm. The catalysed reaction is AMP + diphosphate = 5-phospho-alpha-D-ribose 1-diphosphate + adenine. It functions in the pathway purine metabolism; AMP biosynthesis via salvage pathway; AMP from adenine: step 1/1. Its function is as follows. Catalyzes a salvage reaction resulting in the formation of AMP, that is energically less costly than de novo synthesis. The polypeptide is Adenine phosphoribosyltransferase (Francisella tularensis subsp. holarctica (strain FTNF002-00 / FTA)).